The sequence spans 151 residues: Large ribosomal subunit protein bL9 (151 aa).

Belongs to the bacterial ribosomal protein bL9 family.

Its function is as follows. Binds to the 23S rRNA. The protein is Large ribosomal subunit protein bL9 of Lactobacillus delbrueckii subsp. bulgaricus (strain ATCC 11842 / DSM 20081 / BCRC 10696 / JCM 1002 / NBRC 13953 / NCIMB 11778 / NCTC 12712 / WDCM 00102 / Lb 14).